A 362-amino-acid chain; its full sequence is MSPTVTVQLTDDTAKRFEGHAKLLAIGTATPTNWVDQATYPDFYFRITNSERLLEHKEKFRRICNKSKIRFRHLVLTEELLKKSPNLCTYNDASLNTRQDILVSEVPKLGKEAAMKAIKEWGRPISEITHLVFCTTSGVDMPGADFQLTKLLGLNSSVKRLMMYQQGCNAGAAMLRLVKDLAENNKGARVLVVCSEITINIFRGPSLEQDDNLLAQCLFGDGSAAMIVGKDPRPGLETPLFELVSSAQTIVPNTDSHLKLTLREMGLTFHCSRAVPSVLAENVEDCLVKAFEPYGISDWNSIFWVFHPGGYAIVDRVEERLGLGPERLRASRDVLSEYGNLTSACVLFILDEMRKKSKKDEQ.

The active site involves cysteine 168.

Belongs to the thiolase-like superfamily. Chalcone/stilbene synthases family.

The enzyme catalyses (E)-4-coumaroyl-CoA + 3 malonyl-CoA + 3 H(+) = 2',4,4',6'-tetrahydroxychalcone + 3 CO2 + 4 CoA. It participates in secondary metabolite biosynthesis; flavonoid biosynthesis. In terms of biological role, the primary product of this enzyme is 4,2',4',6'-tetrahydroxychalcone (also termed naringenin-chalcone or chalcone) which can under specific conditions spontaneously isomerize into naringenin. This Ipomoea triloba (Trilobed morning glory) protein is Chalcone synthase A (CHSA).